Consider the following 648-residue polypeptide: MDRVTRYPIFSNPRSARVTSLVLDEDTSYTVELVGVGPEAGWSQGDLQAWSTEYQTRPDVKRTNVSSNRRVFLGQQSPRSLYLEDEDEEIKSYHLDDSSDTLCRQRRELEAERWAVIQSQAVRKGGTVATLQAASDHGDLRIARQPQSTVTEEILVDTEQIDFLAARQQFLSLEKANTNPVPCGLTARETFPRTPPGINQAPKASTGPHLANGYTTAVTSPMKEVTLEKSFHVSPARSIHIVNDPGSQTQAESPETPKETPIEREIRLAQEREAELREQRGLGRAAGHQELVQIPSRPLLSKMSLTETPPRRDRGRPSLYVQRDMVQETQREEDHRREGLQVGRASTPDWPSQDPQPGLQRSLSSDCILSPDARATDPAPEARKVNRIPLDAYQPYLGPGTPKLEFSAFGVYSKPSGVSTEDTKATVFQKATESPRHVSESSGRSLSSKQEWSKPPGKATNVGVVRLGNFHLRPLRFKVPDVPQGTETPHTWGWEVAGGPILRLQKSQSSDLLEREMESVLRREREVAEERRNAFFPEVFSPVPAEDESHEQDSRSSSRASGITGSYSVSESPLFTPVHLNSGLVWKVEAPEDSAPPGQKTRKEMWYAGINPSDSVNSEVLGATRVKRHKNLLAERWEAHIYASEDEN.

Ser-77 carries the post-translational modification Phosphoserine; by CDK1. Phosphothreonine is present on residues Thr-149 and Thr-190. Ser-220 bears the Phosphoserine mark. Disordered regions lie at residues 242-383 (VNDP…PEAR) and 430-460 (KATESPRHVSESSGRSLSSKQEWSKPPGKAT). The residue at position 253 (Ser-253) is a Phosphoserine; by CDK1. Residues 255–281 (ETPKETPIEREIRLAQEREAELREQRG) are compositionally biased toward basic and acidic residues. Position 256 is a phosphothreonine; by CDK1 (Thr-256). Ser-318 carries the phosphoserine modification. Basic and acidic residues predominate over residues 325 to 339 (MVQETQREEDHRREG). Residue Thr-347 is modified to Phosphothreonine; by CDK1. The segment covering 349-367 (DWPSQDPQPGLQRSLSSDC) has biased composition (polar residues). Residues Ser-352 and Ser-364 each carry the phosphoserine modification. A phosphoserine; by PLK1 mark is found at Ser-365 and Ser-439. Over residues 440-450 (ESSGRSLSSKQ) the composition is skewed to polar residues. A phosphoserine mark is found at Ser-507 and Ser-509. Residues 511 to 534 (DLLEREMESVLRREREVAEERRNA) adopt a coiled-coil conformation. The segment at 539–568 (VFSPVPAEDESHEQDSRSSSRASGITGSYS) is disordered. At Ser-541 the chain carries Phosphoserine; by CDK1. Ser-554 carries the phosphoserine; by PLK1 modification. Polar residues predominate over residues 557 to 568 (SSRASGITGSYS). A Phosphoserine modification is found at Ser-644.

This sequence belongs to the MISP family. In terms of assembly, associates with F-actin. Interacts with DCTN1; this interaction regulates DCTN1 distribution at the cell cortex. Interacts with PTK2/FAK and MAPRE1. Post-translationally, phosphorylated by CDK1 and PLK1. CDK1 is the priming kinase for PLK1 phosphorylation. Phosphorylation by PLK1 is required for proper spindle orientation at metaphase.

It is found in the cell junction. The protein localises to the focal adhesion. It localises to the cytoplasm. Its subcellular location is the cytoskeleton. The protein resides in the cell cortex. Its function is as follows. Plays a role in mitotic spindle orientation and mitotic progression. Regulates the distribution of dynactin at the cell cortex in a PLK1-dependent manner, thus stabilizing cortical and astral microtubule attachments required for proper mitotic spindle positioning. May link microtubules to the actin cytoskeleton and focal adhesions. May be required for directed cell migration and centrosome orientation. May also be necessary for proper stacking of the Golgi apparatus. This chain is Mitotic interactor and substrate of PLK1, found in Mus musculus (Mouse).